The following is a 193-amino-acid chain: Phosphoheptose isomerase (193 aa).

Residues 37–193 (LANAFKAGGK…QLIEKEMADQ (157 aa)) form the SIS domain. 52 to 54 (NGG) contributes to the substrate binding site. The Zn(2+) site is built by histidine 61 and glutamate 65. Residues glutamate 65, 93 to 94 (ND), 119 to 121 (STS), serine 124, and glutamine 172 contribute to the substrate site. Zn(2+) contacts are provided by glutamine 172 and histidine 180.

This sequence belongs to the SIS family. GmhA subfamily. Homotetramer. Zn(2+) is required as a cofactor.

It localises to the cytoplasm. It catalyses the reaction 2 D-sedoheptulose 7-phosphate = D-glycero-alpha-D-manno-heptose 7-phosphate + D-glycero-beta-D-manno-heptose 7-phosphate. It participates in carbohydrate biosynthesis; D-glycero-D-manno-heptose 7-phosphate biosynthesis; D-glycero-alpha-D-manno-heptose 7-phosphate and D-glycero-beta-D-manno-heptose 7-phosphate from sedoheptulose 7-phosphate: step 1/1. Functionally, catalyzes the isomerization of sedoheptulose 7-phosphate in D-glycero-D-manno-heptose 7-phosphate. The protein is Phosphoheptose isomerase of Pectobacterium atrosepticum (strain SCRI 1043 / ATCC BAA-672) (Erwinia carotovora subsp. atroseptica).